We begin with the raw amino-acid sequence, 192 residues long: Large ribosomal subunit protein uL18 (192 aa).

The protein belongs to the universal ribosomal protein uL18 family. Part of the 50S ribosomal subunit. Contacts the 5S and 23S rRNAs.

In terms of biological role, this is one of the proteins that bind and probably mediate the attachment of the 5S RNA into the large ribosomal subunit, where it forms part of the central protuberance. This Methanothermobacter thermautotrophicus (strain ATCC 29096 / DSM 1053 / JCM 10044 / NBRC 100330 / Delta H) (Methanobacterium thermoautotrophicum) protein is Large ribosomal subunit protein uL18.